A 310-amino-acid polypeptide reads, in one-letter code: Fatty acid elongase 1 (310 aa).

The Lumenal segment spans residues 1–63 (MVSDWKNFCL…VGKQPLSEPR (63 aa)). The chain crosses the membrane as a helical span at residues 64–84 (PVLLFIAMYYVVIFGGRSLVK). Topologically, residues 85-100 (SCKPLKLRFISQVHNL) are cytoplasmic. The chain crosses the membrane as a helical span at residues 101-121 (MLTSVSFLWLILMVEQMLPIV). Over 122–141 (YRHGLYFAVCNVESWTQPME) the chain is Lumenal. The chain crosses the membrane as a helical span at residues 142 to 163 (TLYYLNYMTKFVEFADTVLMVL). Residues 164–174 (KHRKLTFLHTY) are Cytoplasmic-facing. The short motif at 172–176 (HTYHH) is the HxxHH motif element. Residues 175–196 (HHGATALLCYNQLVGYTAVTWV) traverse the membrane as a helical segment. The Lumenal portion of the chain corresponds to 197–201 (PVTLN). Residues 202-223 (LAVHVLMYWYYFLSASGIRVWW) traverse the membrane as a helical segment. The Cytoplasmic segment spans residues 224–234 (KAWVTRLQIVQ). Residues 235 to 255 (FMLDLIVVYYVLYQKIVAAYF) traverse the membrane as a helical segment. Residues 256–271 (KNACTPQCEDCLGSMT) lie on the Lumenal side of the membrane. The helical transmembrane segment at 272-292 (AIAAGAAILTSYLFLFISFYI) threads the bilayer. Over 293-310 (EVYKRGSASGKKKINKNN) the chain is Cytoplasmic. Residues 304 to 307 (KKIN) carry the Di-lysine motif motif.

The protein belongs to the ELO family.

The protein localises to the endoplasmic reticulum membrane. It carries out the reaction a very-long-chain acyl-CoA + malonyl-CoA + H(+) = a very-long-chain 3-oxoacyl-CoA + CO2 + CoA. The enzyme catalyses tetradecanoyl-CoA + malonyl-CoA + H(+) = 3-oxohexadecanoyl-CoA + CO2 + CoA. It catalyses the reaction (9Z)-tetradecenoyl-CoA + malonyl-CoA + H(+) = 3-oxo-(11Z)-hexadecenoyl-CoA + CO2 + CoA. Component of a microsomal membrane bound medium-chain fatty acid elongation system, which extends medium-chain-length fatty acids to long-chain fatty acids. Component of elongase I, which extends 12-16-carbon fatty acyl-CoAs such as lauroyl-CoA to 14-18-carbon fatty acids by incorporation of malonyl-CoA. The polypeptide is Fatty acid elongase 1 (Saccharomyces cerevisiae (strain ATCC 204508 / S288c) (Baker's yeast)).